The chain runs to 333 residues: Mitochondrial thiamine pyrophosphate carrier 1 (333 aa).

Solcar repeat units lie at residues 12 to 115 (GSRL…ITQF), 129 to 215 (PPSV…LRPR), and 222 to 318 (PYSS…ALKL). A run of 6 helical transmembrane segments spans residues 17 to 35 (VTAAGATAGLISRFVIAPL), 96 to 112 (LLYVSYAAVQFTTYRSI), 135 to 155 (FIAGASAGGVATAVTYPLDLL), 190 to 209 (GLGPGLAQIIPYMGTFFCVY), 221 to 238 (LPYSSGSAVAGVLASVMA), and 293 to 310 (GLTVSLFKAAPASAVTMW).

Belongs to the mitochondrial carrier (TC 2.A.29) family.

The protein localises to the mitochondrion inner membrane. Its function is as follows. Mitochondrial transporter that mediates uptake of thiamine pyrophosphate (ThPP) into mitochondria. The protein is Mitochondrial thiamine pyrophosphate carrier 1 (tpc-1) of Neurospora crassa (strain ATCC 24698 / 74-OR23-1A / CBS 708.71 / DSM 1257 / FGSC 987).